Consider the following 773-residue polypeptide: Glucan endo-1,3-beta-D-glucosidase (773 aa).

The beta-sandwich subdomain stretch occupies residues 1 to 194 (MPPGAKVPQA…KNYFSIAVLP (194 aa)). The 647-residue stretch at 1–647 (MPPGAKVPQA…HWICNLDSLG (647 aa)) folds into the GH81 domain. Mg(2+) is bound by residues isoleucine 31, asparagine 34, glutamine 35, tyrosine 36, and alanine 89. An alpha/beta subdomain region spans residues 195 to 288 (DNTVSTLTYY…QGTSFKTVYR (94 aa)). Residues 298–647 (DKGTYDREAL…HWICNLDSLG (350 aa)) form a (alpha/beta)6 barrel subdomain region. Tyrosine 327 and lysine 331 together coordinate (1,3-beta-D-glucosyl)n. The Ca(2+) site is built by aspartate 365, threonine 368, glutamate 373, and lysine 376. (1,3-beta-D-glucosyl)n contacts are provided by aspartate 402 and histidine 406. Residue aspartate 402 is part of the active site. Residues leucine 454, arginine 455, and phenylalanine 457 each contribute to the Ca(2+) site. 3 residues coordinate (1,3-beta-D-glucosyl)n: asparagine 477, glutamate 479, and glutamate 483. Residues glutamate 479 and glutamate 483 contribute to the active site. Mg(2+) contacts are provided by lysine 527, lysine 618, asparagine 619, and tryptophan 621. Ca(2+) contacts are provided by aspartate 712, asparagine 714, aspartate 716, glycine 717, lysine 718, aspartate 723, aspartate 748, isoleucine 749, asparagine 750, aspartate 752, lysine 754, and aspartate 759.

This sequence belongs to the glycosyl hydrolase 81 family. It depends on Ca(2+) as a cofactor. Mg(2+) serves as cofactor.

It localises to the secreted. The catalysed reaction is Hydrolysis of (1-&gt;3)-beta-D-glucosidic linkages in (1-&gt;3)-beta-D-glucans.. Its activity is regulated as follows. Inhibited by manganese, zinc, and copper ions. In terms of biological role, cleaves internal linkages in 1,3-beta-glucan. May contribute to plant biomass degradation. The protein is Glucan endo-1,3-beta-D-glucosidase of Acetivibrio thermocellus (strain ATCC 27405 / DSM 1237 / JCM 9322 / NBRC 103400 / NCIMB 10682 / NRRL B-4536 / VPI 7372) (Clostridium thermocellum).